The primary structure comprises 274 residues: Ribonucleoside-diphosphate reductase small chain (274 aa).

Fe cation is bound by residues aspartate 70, glutamate 101, and histidine 104. The active site involves tyrosine 108. Glutamate 163, glutamate 197, and histidine 200 together coordinate Fe cation.

Belongs to the ribonucleoside diphosphate reductase small chain family. In terms of assembly, heterodimer of a large and a small chain. Requires Fe cation as cofactor.

The enzyme catalyses a 2'-deoxyribonucleoside 5'-diphosphate + [thioredoxin]-disulfide + H2O = a ribonucleoside 5'-diphosphate + [thioredoxin]-dithiol. Functionally, ribonucleoside-diphosphate reductase holoenzyme provides the precursors necessary for viral DNA synthesis. Allows virus growth in non-dividing cells. Catalyzes the biosynthesis of deoxyribonucleotides from the corresponding ribonucleotides. The sequence is that of Ribonucleoside-diphosphate reductase small chain from Sus scrofa (Pig).